The sequence spans 448 residues: Glutamate--tRNA ligase 2 (448 aa).

A 'HIGH' region motif is present at residues proline 9–asparagine 19. The 'KMSKS' region motif lies at lysine 240–arginine 244. Lysine 243 is an ATP binding site.

The protein belongs to the class-I aminoacyl-tRNA synthetase family. Glutamate--tRNA ligase type 1 subfamily. Monomer.

The protein resides in the cytoplasm. The catalysed reaction is tRNA(Glu) + L-glutamate + ATP = L-glutamyl-tRNA(Glu) + AMP + diphosphate. Functionally, catalyzes the attachment of glutamate to tRNA(Glu) in a two-step reaction: glutamate is first activated by ATP to form Glu-AMP and then transferred to the acceptor end of tRNA(Glu). The sequence is that of Glutamate--tRNA ligase 2 from Orientia tsutsugamushi (strain Boryong) (Rickettsia tsutsugamushi).